The following is a 288-amino-acid chain: Executioner caspase (288 aa).

Cys131 is an active-site residue.

This sequence belongs to the peptidase C14A family.

In terms of biological role, may induce host cell apoptosis and contribute of the establishment of a special cell cleavage process in which apoppotic bodies are rescued by the virus and differentiate to form large vesicles in which virion assembles. The sequence is that of Executioner caspase from Spodoptera frugiperda ascovirus 1a (SfAV-1a).